The primary structure comprises 156 residues: Lipoprotein signal peptidase (156 aa).

Transmembrane regions (helical) follow at residues 5–25 (FFVVYLIAALVIAVDQWTKQW), 63–83 (IEWQFWLFFAAAVTAVLAIIA), and 90–110 (SNPYLFTGFGLIMGGAIGNLI). Catalysis depends on residues D120 and D138. The helical transmembrane segment at 133–153 (AFNVADMGICVGAFFVCLAVY) threads the bilayer.

It belongs to the peptidase A8 family.

It localises to the cell inner membrane. The enzyme catalyses Release of signal peptides from bacterial membrane prolipoproteins. Hydrolyzes -Xaa-Yaa-Zaa-|-(S,diacylglyceryl)Cys-, in which Xaa is hydrophobic (preferably Leu), and Yaa (Ala or Ser) and Zaa (Gly or Ala) have small, neutral side chains.. It functions in the pathway protein modification; lipoprotein biosynthesis (signal peptide cleavage). Its function is as follows. This protein specifically catalyzes the removal of signal peptides from prolipoproteins. The sequence is that of Lipoprotein signal peptidase from Oleidesulfovibrio alaskensis (strain ATCC BAA-1058 / DSM 17464 / G20) (Desulfovibrio alaskensis).